Here is a 144-residue protein sequence, read N- to C-terminus: Large ribosomal subunit protein uL13 (144 aa).

This sequence belongs to the universal ribosomal protein uL13 family. In terms of assembly, part of the 50S ribosomal subunit.

Its function is as follows. This protein is one of the early assembly proteins of the 50S ribosomal subunit, although it is not seen to bind rRNA by itself. It is important during the early stages of 50S assembly. The protein is Large ribosomal subunit protein uL13 of Nitrosospira multiformis (strain ATCC 25196 / NCIMB 11849 / C 71).